Reading from the N-terminus, the 244-residue chain is UPF0173 metal-dependent hydrolase RoseRS_3945 (244 aa).

This sequence belongs to the UPF0173 family.

This Roseiflexus sp. (strain RS-1) protein is UPF0173 metal-dependent hydrolase RoseRS_3945.